Here is a 354-residue protein sequence, read N- to C-terminus: Guanine nucleotide-binding protein G(o) subunit alpha (354 aa).

A lipid anchor (N-myristoyl glycine) is attached at Gly-2. The S-palmitoyl cysteine moiety is linked to residue Cys-3. The region spanning Lys-32–Tyr-354 is the G-alpha domain. The interval Lys-35–Thr-48 is G1 motif. GTP is bound by residues Glu-43, Lys-46, Ser-47, Thr-48, Ser-152, Leu-176, Arg-177, Thr-178, and Arg-179. Ser-47 contacts Mg(2+). A G2 motif region spans residues Asp-174–Thr-182. Arg-179 is subject to ADP-ribosylarginine; by cholera toxin. Residue Thr-182 coordinates Mg(2+). Residues Phe-197–Arg-206 form a G3 motif region. Gln-205 is subject to 5-glutamyl histamine. Residues Ile-266–Asp-273 form a G4 motif region. Asn-270, Asp-273, and Cys-325 together coordinate GTP. Residues Thr-324 to Thr-329 are G5 motif. The S-palmitoyl cysteine moiety is linked to residue Cys-351. The residue at position 351 (Cys-351) is an ADP-ribosylcysteine; by pertussis toxin.

This sequence belongs to the G-alpha family. G(i/o/t/z) subfamily. G proteins are composed of 3 units; alpha, beta and gamma. The alpha chain contains the guanine nucleotide binding site. Forms a complex with GNB1 and GNG3. Interacts with RGS14. Interacts with RGS16. Interacts with RGS19. Interacts (when palmitoylated) with ADGRG3. Post-translationally, histaminylated at Gln-205 residues by TGM2. Palmitoylated at Cys-351, leading to binding to ADGRG3.

It localises to the cell membrane. The protein localises to the membrane. It catalyses the reaction GTP + H2O = GDP + phosphate + H(+). With respect to regulation, the GTPase activity is promoted by GTPAse activators, such as RGS14, RGS16 and RGS19. Functionally, guanine nucleotide-binding proteins (G proteins) function as transducers downstream of G protein-coupled receptors (GPCRs) in numerous signaling cascades. The alpha chain contains the guanine nucleotide binding site and alternates between an active, GTP-bound state and an inactive, GDP-bound state. Signaling by an activated GPCR promotes GDP release and GTP binding. The alpha subunit has a low GTPase activity that converts bound GTP to GDP, thereby terminating the signal. Both GDP release and GTP hydrolysis are modulated by numerous regulatory proteins. Signaling is mediated via effector proteins, such as adenylate cyclase. Inhibits adenylate cyclase activity, leading to decreased intracellular cAMP levels. This is Guanine nucleotide-binding protein G(o) subunit alpha (GNAO1) from Homo sapiens (Human).